Here is a 122-residue protein sequence, read N- to C-terminus: Urease subunit beta (122 aa).

The protein belongs to the urease beta subunit family. Heterotrimer of UreA (gamma), UreB (beta) and UreC (alpha) subunits. Three heterotrimers associate to form the active enzyme.

The protein localises to the cytoplasm. The catalysed reaction is urea + 2 H2O + H(+) = hydrogencarbonate + 2 NH4(+). The protein operates within nitrogen metabolism; urea degradation; CO(2) and NH(3) from urea (urease route): step 1/1. This chain is Urease subunit beta, found in Flavobacterium johnsoniae (strain ATCC 17061 / DSM 2064 / JCM 8514 / BCRC 14874 / CCUG 350202 / NBRC 14942 / NCIMB 11054 / UW101) (Cytophaga johnsonae).